Consider the following 917-residue polypeptide: Methionine--tRNA ligase, cytoplasmic (917 aa).

The short motif at 44–54 (PYVNNVPHLGN) is the 'HIGH' region element. The short motif at 367 to 371 (KFSKS) is the 'KMSKS' region element. ATP is bound at residue Lys-370. 2 disordered regions span residues 591–623 (GSQDAQSSAPKTAEKPKQQKKQAPTKDKKGDKK) and 702–749 (SCTP…AAAA). Residues 614-623 (PTKDKKGDKK) are compositionally biased toward basic and acidic residues. The segment covering 702-713 (SCTPTPTSTPAS) has biased composition (low complexity). Residues 732–741 (EPKKAKEQKK) show a composition bias toward basic and acidic residues. One can recognise a tRNA-binding domain in the interval 756–857 (DVGRLDMRVG…ADSKPGTPVV (102 aa)).

This sequence belongs to the class-I aminoacyl-tRNA synthetase family.

The protein resides in the cytoplasm. It carries out the reaction tRNA(Met) + L-methionine + ATP = L-methionyl-tRNA(Met) + AMP + diphosphate. The chain is Methionine--tRNA ligase, cytoplasmic from Caenorhabditis elegans.